A 128-amino-acid chain; its full sequence is EPIDERMAL PATTERNING FACTOR-like protein 2 (128 aa).

Positions 1-28 (MVWSSNMSSFLLILLILNSTHFSLMANG) are cleaved as a signal peptide. 3 cysteine pairs are disulfide-bonded: C60-C119, C65-C71, and C68-C121. A compositionally biased stretch (polar residues) spans 79–90 (NPQTKLHSPLTT). The disordered stretch occupies residues 79–100 (NPQTKLHSPLTTSSSSSSETIH).

The protein belongs to the plant cysteine rich small secretory peptide family. Epidermal patterning factor subfamily.

The protein resides in the secreted. Controls stomatal patterning. This is EPIDERMAL PATTERNING FACTOR-like protein 2 from Arabidopsis thaliana (Mouse-ear cress).